The sequence spans 430 residues: Phosphomethylpyrimidine synthase (430 aa).

Substrate contacts are provided by residues N67, M96, Y125, H161, 183–185 (SRG), 224–227 (DALR), and E263. H267 provides a ligand contact to Zn(2+). Y290 provides a ligand contact to substrate. Residue H331 participates in Zn(2+) binding. [4Fe-4S] cluster-binding residues include C406, C409, and C413.

Belongs to the ThiC family. As to quaternary structure, homodimer. [4Fe-4S] cluster serves as cofactor.

The catalysed reaction is 5-amino-1-(5-phospho-beta-D-ribosyl)imidazole + S-adenosyl-L-methionine = 4-amino-2-methyl-5-(phosphooxymethyl)pyrimidine + CO + 5'-deoxyadenosine + formate + L-methionine + 3 H(+). It functions in the pathway cofactor biosynthesis; thiamine diphosphate biosynthesis. Functionally, catalyzes the synthesis of the hydroxymethylpyrimidine phosphate (HMP-P) moiety of thiamine from aminoimidazole ribotide (AIR) in a radical S-adenosyl-L-methionine (SAM)-dependent reaction. In Campylobacter jejuni subsp. jejuni serotype O:2 (strain ATCC 700819 / NCTC 11168), this protein is Phosphomethylpyrimidine synthase.